The primary structure comprises 283 residues: Pantothenate synthetase (283 aa).

Residue 30-37 coordinates ATP; it reads MGCLHEGH. Histidine 37 functions as the Proton donor in the catalytic mechanism. Glutamine 61 provides a ligand contact to (R)-pantoate. Glutamine 61 contributes to the beta-alanine binding site. ATP is bound at residue 147–150; the sequence is GQKD. Glutamine 153 contributes to the (R)-pantoate binding site. ATP contacts are provided by residues valine 176 and 184 to 187; that span reads KSSR.

It belongs to the pantothenate synthetase family. As to quaternary structure, homodimer.

The protein resides in the cytoplasm. The enzyme catalyses (R)-pantoate + beta-alanine + ATP = (R)-pantothenate + AMP + diphosphate + H(+). Its pathway is cofactor biosynthesis; (R)-pantothenate biosynthesis; (R)-pantothenate from (R)-pantoate and beta-alanine: step 1/1. In terms of biological role, catalyzes the condensation of pantoate with beta-alanine in an ATP-dependent reaction via a pantoyl-adenylate intermediate. The chain is Pantothenate synthetase from Clostridium novyi (strain NT).